The primary structure comprises 371 residues: Aminomethyltransferase (371 aa).

Belongs to the GcvT family. As to quaternary structure, the glycine cleavage system is composed of four proteins: P, T, L and H.

The catalysed reaction is N(6)-[(R)-S(8)-aminomethyldihydrolipoyl]-L-lysyl-[protein] + (6S)-5,6,7,8-tetrahydrofolate = N(6)-[(R)-dihydrolipoyl]-L-lysyl-[protein] + (6R)-5,10-methylene-5,6,7,8-tetrahydrofolate + NH4(+). The glycine cleavage system catalyzes the degradation of glycine. The sequence is that of Aminomethyltransferase from Cutibacterium acnes (strain DSM 16379 / KPA171202) (Propionibacterium acnes).